Consider the following 135-residue polypeptide: Probable histone H2A.1 (135 aa).

It belongs to the histone H2A family. As to quaternary structure, the nucleosome is a histone octamer containing two molecules each of H2A, H2B, H3 and H4 assembled in one H3-H4 heterotetramer and two H2A-H2B heterodimers. The octamer wraps approximately 147 bp of DNA.

Its subcellular location is the nucleus. The protein localises to the chromosome. In terms of biological role, core component of nucleosome. Nucleosomes wrap and compact DNA into chromatin, limiting DNA accessibility to the cellular machineries which require DNA as a template. Histones thereby play a central role in transcription regulation, DNA repair, DNA replication and chromosomal stability. DNA accessibility is regulated via a complex set of post-translational modifications of histones, also called histone code, and nucleosome remodeling. The polypeptide is Probable histone H2A.1 (Oryza sativa subsp. japonica (Rice)).